The following is a 597-amino-acid chain: Elongation factor 4 (597 aa).

The region spanning 2-184 is the tr-type G domain; it reads QHIRNFSIIA…AVISRIPPPK (183 aa). Residues 14-19 and 131-134 contribute to the GTP site; these read DHGKST and NKID.

Belongs to the TRAFAC class translation factor GTPase superfamily. Classic translation factor GTPase family. LepA subfamily.

The protein localises to the cell inner membrane. It carries out the reaction GTP + H2O = GDP + phosphate + H(+). Functionally, required for accurate and efficient protein synthesis under certain stress conditions. May act as a fidelity factor of the translation reaction, by catalyzing a one-codon backward translocation of tRNAs on improperly translocated ribosomes. Back-translocation proceeds from a post-translocation (POST) complex to a pre-translocation (PRE) complex, thus giving elongation factor G a second chance to translocate the tRNAs correctly. Binds to ribosomes in a GTP-dependent manner. This is Elongation factor 4 from Nitrosospira multiformis (strain ATCC 25196 / NCIMB 11849 / C 71).